Here is a 204-residue protein sequence, read N- to C-terminus: Putative peptidase PfaP (204 aa).

The first 27 residues, 1–27 (MRLRKTRKIVVSMKDMAASGGYYIASS), serve as a signal peptide directing secretion. Serine 19 functions as the Nucleophile in the catalytic mechanism. The active-site Proton donor/acceptor is the lysine 70.

Belongs to the peptidase S49 family.

Functionally, possible protease. May be involved in export of periplasmic flagella proteins. The chain is Putative peptidase PfaP (pfaP) from Leptospira borgpetersenii.